The following is a 275-amino-acid chain: Proteasome subunit beta (275 aa).

The propeptide at 1-52 (MQDTTANQVAANATSSFTEHLQRNRPGLLPYNQPFPAALTGAGSQPLQVPHA) is removed in mature form; by autocatalysis. The active-site Nucleophile is the Thr53.

Belongs to the peptidase T1B family. In terms of assembly, the 20S proteasome core is composed of 14 alpha and 14 beta subunits that assemble into four stacked heptameric rings, resulting in a barrel-shaped structure. The two inner rings, each composed of seven catalytic beta subunits, are sandwiched by two outer rings, each composed of seven alpha subunits. The catalytic chamber with the active sites is on the inside of the barrel. Has a gated structure, the ends of the cylinder being occluded by the N-termini of the alpha-subunits. Is capped by the proteasome-associated ATPase, ARC.

The protein localises to the cytoplasm. It catalyses the reaction Cleavage of peptide bonds with very broad specificity.. Its pathway is protein degradation; proteasomal Pup-dependent pathway. Its activity is regulated as follows. The formation of the proteasomal ATPase ARC-20S proteasome complex, likely via the docking of the C-termini of ARC into the intersubunit pockets in the alpha-rings, may trigger opening of the gate for substrate entry. Interconversion between the open-gate and close-gate conformations leads to a dynamic regulation of the 20S proteasome proteolysis activity. Functionally, component of the proteasome core, a large protease complex with broad specificity involved in protein degradation. This chain is Proteasome subunit beta, found in Arthrobacter sp. (strain FB24).